A 144-amino-acid chain; its full sequence is D-aminoacyl-tRNA deacylase (144 aa).

The short motif at Gly-136–Pro-137 is the Gly-cisPro motif, important for rejection of L-amino acids element.

The protein belongs to the DTD family. In terms of assembly, homodimer.

The protein resides in the cytoplasm. It carries out the reaction glycyl-tRNA(Ala) + H2O = tRNA(Ala) + glycine + H(+). The enzyme catalyses a D-aminoacyl-tRNA + H2O = a tRNA + a D-alpha-amino acid + H(+). In terms of biological role, an aminoacyl-tRNA editing enzyme that deacylates mischarged D-aminoacyl-tRNAs. Also deacylates mischarged glycyl-tRNA(Ala), protecting cells against glycine mischarging by AlaRS. Acts via tRNA-based rather than protein-based catalysis; rejects L-amino acids rather than detecting D-amino acids in the active site. By recycling D-aminoacyl-tRNA to D-amino acids and free tRNA molecules, this enzyme counteracts the toxicity associated with the formation of D-aminoacyl-tRNA entities in vivo and helps enforce protein L-homochirality. The polypeptide is D-aminoacyl-tRNA deacylase (Vibrio atlanticus (strain LGP32) (Vibrio splendidus (strain Mel32))).